The primary structure comprises 187 residues: dCTP deaminase (187 aa).

DCTP contacts are provided by residues 110–115, 134–136, glutamine 155, tyrosine 169, and glutamine 179; these read KSTYAR and TLE. Catalysis depends on glutamate 136, which acts as the Proton donor/acceptor.

It belongs to the dCTP deaminase family. As to quaternary structure, homotrimer.

It catalyses the reaction dCTP + H2O + H(+) = dUTP + NH4(+). Its pathway is pyrimidine metabolism; dUMP biosynthesis; dUMP from dCTP (dUTP route): step 1/2. In terms of biological role, catalyzes the deamination of dCTP to dUTP. This chain is dCTP deaminase, found in Bordetella bronchiseptica (strain ATCC BAA-588 / NCTC 13252 / RB50) (Alcaligenes bronchisepticus).